We begin with the raw amino-acid sequence, 707 residues long: Elongation factor G (707 aa).

Residues 8–296 (ERYRNFGIMA…AVVDFLPAPT (289 aa)) enclose the tr-type G domain. GTP-binding positions include 17–24 (AHIDAGKT), 94–98 (DTPGH), and 148–151 (NKMD).

It belongs to the TRAFAC class translation factor GTPase superfamily. Classic translation factor GTPase family. EF-G/EF-2 subfamily.

It is found in the cytoplasm. In terms of biological role, catalyzes the GTP-dependent ribosomal translocation step during translation elongation. During this step, the ribosome changes from the pre-translocational (PRE) to the post-translocational (POST) state as the newly formed A-site-bound peptidyl-tRNA and P-site-bound deacylated tRNA move to the P and E sites, respectively. Catalyzes the coordinated movement of the two tRNA molecules, the mRNA and conformational changes in the ribosome. The chain is Elongation factor G from Paracoccus denitrificans (strain Pd 1222).